The primary structure comprises 395 residues: uncharacterized protein (395 aa).

An N-terminal signal peptide occupies residues methionine 1 to serine 18. A lipid anchor (N-palmitoyl cysteine) is attached at cysteine 19. The S-diacylglycerol cysteine moiety is linked to residue cysteine 19.

It is found in the cell outer membrane. May be involved in ulvan degradation. Ulvan is the main polysaccharide component of the Ulvales (green seaweed) cell wall. It is composed of disaccharide building blocks comprising 3-sulfated rhamnose (Rha3S) linked to D-glucuronic acid (GlcA), L-iduronic acid (IduA), or D-xylose (Xyl). This is an uncharacterized protein from Formosa agariphila (strain DSM 15362 / KCTC 12365 / LMG 23005 / KMM 3901 / M-2Alg 35-1).